The sequence spans 278 residues: MTTRIDTRFAELKKQGRSAFVTFLMGGDPDPATSLAIIKALPKAGADIIEIGMPFTDPMADGPAVQAAGRRALNAGMTVTRTLQMIHDFRKGEGSTPVVLMGYYNPIYIYGVEKFLTDAKAAGVDGLIVVDLPPEEDSELCIPAMKAGLNFIRLATPTTDDKRLPAVLANTSGFVYYVSITGITGSAAADSTAVGAAVARIKRHTTLPVCVGFGIRTADAARGIAERSDGAVVGSALVDALSGSLDAEGKATAKTVNAVADLAAALAAGVRSARQAAE.

Residues Glu50 and Asp61 each act as proton acceptor in the active site.

It belongs to the TrpA family. In terms of assembly, tetramer of two alpha and two beta chains.

It carries out the reaction (1S,2R)-1-C-(indol-3-yl)glycerol 3-phosphate + L-serine = D-glyceraldehyde 3-phosphate + L-tryptophan + H2O. It functions in the pathway amino-acid biosynthesis; L-tryptophan biosynthesis; L-tryptophan from chorismate: step 5/5. Functionally, the alpha subunit is responsible for the aldol cleavage of indoleglycerol phosphate to indole and glyceraldehyde 3-phosphate. In Nitrobacter hamburgensis (strain DSM 10229 / NCIMB 13809 / X14), this protein is Tryptophan synthase alpha chain.